The following is a 561-amino-acid chain: Putative cysteine ligase BshC (561 aa).

A coiled-coil region spans residues L472 to L517.

The protein belongs to the BshC family.

The sequence is that of Putative cysteine ligase BshC from Chloroherpeton thalassium (strain ATCC 35110 / GB-78).